A 109-amino-acid chain; its full sequence is UPF0060 membrane protein ABO_1373 (109 aa).

4 helical membrane-spanning segments follow: residues 1-21 (MLAL…IVGC), 33-53 (PGWV…LLSL), 63-83 (AAYG…VEGV), and 87-107 (PWDF…MFAP).

The protein belongs to the UPF0060 family.

Its subcellular location is the cell inner membrane. The sequence is that of UPF0060 membrane protein ABO_1373 from Alcanivorax borkumensis (strain ATCC 700651 / DSM 11573 / NCIMB 13689 / SK2).